A 212-amino-acid chain; its full sequence is Thymidylate kinase (212 aa).

An ATP-binding site is contributed by 11–18 (GPEGAGKS).

It belongs to the thymidylate kinase family.

The enzyme catalyses dTMP + ATP = dTDP + ADP. In terms of biological role, phosphorylation of dTMP to form dTDP in both de novo and salvage pathways of dTTP synthesis. The polypeptide is Thymidylate kinase (Streptococcus sanguinis (strain SK36)).